The following is a 983-amino-acid chain: Polyhomeotic-like protein 3 (983 aa).

7 disordered regions span residues 1-34 (MDTEPNPGTSSVSTTTSSTTTTTITTSSSRMQQP), 103-149 (LSSG…SSTS), 225-283 (VLSS…TAVT), 313-332 (LHSPPSKVSHHQLILQQQQQ), 339-410 (LQNS…SQSP), 477-509 (PGQQIVSPSHQQYSSLQSSPIPIASPPQMSTSP), and 601-620 (DECVRMDRTPPPPTLSPAAI). Composition is skewed to low complexity over residues 9 to 29 (TSSVSTTTSSTTTTTITTSSS) and 103 to 126 (LSSGRPSTSPTGSVTQQSSMSQTS). A compositionally biased stretch (polar residues) spans 127–139 (INLSTSPTPAQLI). Residues 140-149 (SRSQASSSTS) show a composition bias toward low complexity. Residues 225–257 (VLSSSQNGPPKSTSQTQSLTICHNKTTVTSSKI) are compositionally biased toward polar residues. The span at 258–271 (SQRDPSPESNKKGE) shows a compositional bias: basic and acidic residues. 2 positions are modified to phosphoserine: Ser263 and Ser272. Polar residues predominate over residues 274–283 (SLESRSTAVT). The residue at position 315 (Ser315) is a Phosphoserine. Over residues 365–383 (SNAQSQHCSPIQSHPSPLT) the composition is skewed to polar residues. Over residues 384–398 (VSPNQSQSAQQSVVV) the composition is skewed to low complexity. Residues 477–489 (PGQQIVSPSHQQY) show a composition bias toward polar residues. Residues 490-506 (SSLQSSPIPIASPPQMS) show a composition bias toward low complexity. A phosphothreonine mark is found at Thr609 and Thr614. At Ser616 the chain carries Phosphoserine. Residues Lys691 and Lys732 each participate in a glycyl lysine isopeptide (Lys-Gly) (interchain with G-Cter in SUMO2) cross-link. Residues 691-720 (KPPQAIVKPQILTHVIEGFVIQEGLEPFPV) carry the HD1 motif. A phosphoserine mark is found at Ser761 and Ser762. The segment at 776 to 810 (EEMDSELLKCEFCGKMGYANEFLRSKRFCTMSCAK) adopts an FCS-type zinc-finger fold. The Zn(2+) site is built by Cys785, Cys788, Cys804, and Cys808. Residue Lys810 forms a Glycyl lysine isopeptide (Lys-Gly) (interchain with G-Cter in SUMO2) linkage. Disordered regions lie at residues 827 to 847 (RKPDNQSLGHRGRRPSGPDGA) and 864 to 889 (EEDLASHEDSVPSAMTTRLRRQSERE). Residues 919-983 (WTVDDVWAFI…CARINSLKES (65 aa)) enclose the SAM domain.

In terms of assembly, component of a PRC1-like complex.

Its subcellular location is the nucleus. Component of a Polycomb group (PcG) multiprotein PRC1-like complex, a complex class required to maintain the transcriptionally repressive state of many genes, including Hox genes, throughout development. PcG PRC1 complex acts via chromatin remodeling and modification of histones; it mediates monoubiquitination of histone H2A 'Lys-119', rendering chromatin heritably changed in its expressibility. This is Polyhomeotic-like protein 3 (PHC3) from Homo sapiens (Human).